The sequence spans 434 residues: Glutamate-1-semialdehyde 2,1-aminomutase 2 (434 aa).

The residue at position 269 (Lys269) is an N6-(pyridoxal phosphate)lysine.

It belongs to the class-III pyridoxal-phosphate-dependent aminotransferase family. HemL subfamily. In terms of assembly, homodimer. Pyridoxal 5'-phosphate serves as cofactor.

The protein resides in the cytoplasm. It catalyses the reaction (S)-4-amino-5-oxopentanoate = 5-aminolevulinate. It participates in porphyrin-containing compound metabolism; protoporphyrin-IX biosynthesis; 5-aminolevulinate from L-glutamyl-tRNA(Glu): step 2/2. In Exiguobacterium sp. (strain ATCC BAA-1283 / AT1b), this protein is Glutamate-1-semialdehyde 2,1-aminomutase 2.